Here is a 107-residue protein sequence, read N- to C-terminus: Putative regulatory protein BCG9842_A0044 (107 aa).

This sequence belongs to the RemA family.

The chain is Putative regulatory protein BCG9842_A0044 from Bacillus cereus (strain G9842).